The primary structure comprises 106 residues: Large ribosomal subunit protein uL24 (106 aa).

This sequence belongs to the universal ribosomal protein uL24 family. As to quaternary structure, part of the 50S ribosomal subunit.

One of two assembly initiator proteins, it binds directly to the 5'-end of the 23S rRNA, where it nucleates assembly of the 50S subunit. Functionally, one of the proteins that surrounds the polypeptide exit tunnel on the outside of the subunit. In Blochmanniella pennsylvanica (strain BPEN), this protein is Large ribosomal subunit protein uL24.